Consider the following 406-residue polypeptide: 4-hydroxy-3-methylbut-2-en-1-yl diphosphate synthase (ferredoxin) (406 aa).

Residues Cys-315, Cys-318, Cys-349, and Glu-356 each coordinate [4Fe-4S] cluster.

This sequence belongs to the IspG family. The cofactor is [4Fe-4S] cluster.

The catalysed reaction is (2E)-4-hydroxy-3-methylbut-2-enyl diphosphate + 2 oxidized [2Fe-2S]-[ferredoxin] + H2O = 2-C-methyl-D-erythritol 2,4-cyclic diphosphate + 2 reduced [2Fe-2S]-[ferredoxin] + H(+). The protein operates within isoprenoid biosynthesis; isopentenyl diphosphate biosynthesis via DXP pathway; isopentenyl diphosphate from 1-deoxy-D-xylulose 5-phosphate: step 5/6. Functionally, converts 2C-methyl-D-erythritol 2,4-cyclodiphosphate (ME-2,4cPP) into 1-hydroxy-2-methyl-2-(E)-butenyl 4-diphosphate. In Trichodesmium erythraeum (strain IMS101), this protein is 4-hydroxy-3-methylbut-2-en-1-yl diphosphate synthase (ferredoxin).